The sequence spans 458 residues: UDP-glycosyltransferase 76G1 (458 aa).

H25 acts as the Proton acceptor in catalysis. H25 provides a ligand contact to rebaudioside A. Rubusoside is bound at residue H25. A UDP-binding site is contributed by N27. Catalysis depends on D124, which acts as the Charge relay. Rebaudioside A is bound by residues 146-147 and H155; that span reads TS. UDP contacts are provided by residues S283, 338-339, and 356-364; these read WV and HSGWNSTLE. Residues W359 and 380–381 each bind rebaudioside A; that span reads DQ.

This sequence belongs to the UDP-glycosyltransferase family. In terms of assembly, monomer.

The catalysed reaction is steviolbioside + UDP-alpha-D-glucose = rebaudioside B + UDP + H(+). It carries out the reaction stevioside + UDP-alpha-D-glucose = rebaudioside A + UDP + H(+). The enzyme catalyses rebaudioside E + UDP-alpha-D-glucose = rebaudioside D + UDP + H(+). It catalyses the reaction rebaudioside D + UDP-alpha-D-glucose = rebaudioside M + UDP + H(+). Involved in the biosynthesis of steviol glycosides in leaves. Converts the di-glycoside steviolbioside to the tri-glycoside rebaudioside B. Converts the tri-glycoside stevioside to the tetra-glycoside rebaudioside A. Converts the tetra-glycoside rebaudioside E to the penta-glycoside rebaudioside D. Converts the penta-glycoside rebaudioside D to the hexa-glycoside rebaudioside M. Can glucosylate rubusoside and rebaudioside A in vitro. The protein is UDP-glycosyltransferase 76G1 of Stevia rebaudiana (Stevia).